We begin with the raw amino-acid sequence, 342 residues long: DNA-directed RNA polymerase subunit alpha (342 aa).

The interval 1-239 (MTTFLAKNWS…DQLQVFINFQ (239 aa)) is alpha N-terminal domain (alpha-NTD). The tract at residues 254-342 (INPVLLKKVY…SLAKKHEDQY (89 aa)) is alpha C-terminal domain (alpha-CTD).

It belongs to the RNA polymerase alpha chain family. In terms of assembly, homodimer. The RNAP catalytic core consists of 2 alpha, 1 beta, 1 beta' and 1 omega subunit. When a sigma factor is associated with the core the holoenzyme is formed, which can initiate transcription.

It catalyses the reaction RNA(n) + a ribonucleoside 5'-triphosphate = RNA(n+1) + diphosphate. Its function is as follows. DNA-dependent RNA polymerase catalyzes the transcription of DNA into RNA using the four ribonucleoside triphosphates as substrates. The polypeptide is DNA-directed RNA polymerase subunit alpha (Orientia tsutsugamushi (strain Boryong) (Rickettsia tsutsugamushi)).